The chain runs to 167 residues: Ubiquitin-fold modifier-conjugating enzyme 1 (167 aa).

Cysteine 116 functions as the Glycyl thioester intermediate in the catalytic mechanism.

Belongs to the ubiquitin-conjugating enzyme family. UFC1 subfamily.

Its function is as follows. E2-like enzyme which forms an intermediate with UFM1 via a thioester linkage. This is Ubiquitin-fold modifier-conjugating enzyme 1 from Anopheles gambiae (African malaria mosquito).